We begin with the raw amino-acid sequence, 305 residues long: Porphobilinogen deaminase (305 aa).

Cys238 is subject to S-(dipyrrolylmethanemethyl)cysteine.

This sequence belongs to the HMBS family. In terms of assembly, monomer. It depends on dipyrromethane as a cofactor.

The catalysed reaction is 4 porphobilinogen + H2O = hydroxymethylbilane + 4 NH4(+). It participates in porphyrin-containing compound metabolism; protoporphyrin-IX biosynthesis; coproporphyrinogen-III from 5-aminolevulinate: step 2/4. In terms of biological role, tetrapolymerization of the monopyrrole PBG into the hydroxymethylbilane pre-uroporphyrinogen in several discrete steps. This chain is Porphobilinogen deaminase, found in Rubrobacter xylanophilus (strain DSM 9941 / JCM 11954 / NBRC 16129 / PRD-1).